The primary structure comprises 122 residues: Interferon alpha-inducible protein 27, mitochondrial (122 aa).

A mitochondrion-targeting transit peptide spans 1 to 33 (MEASALTSSAVTSVAKVVRVASGSAVVLPLARI). Residues 34–57 (ATVVIGGVVAMAAVPMVLSAMGFT) traverse the membrane as a helical segment. Lys-69 participates in a covalent cross-link: Glycyl lysine isopeptide (Lys-Gly) (interchain with G-Cter in ubiquitin). 2 helical membrane-spanning segments follow: residues 71–91 (MSAA…VATL) and 99–119 (LSGL…AVIA). Positions 76–122 (IANGGGVASGSLVATLQSLGATGLSGLTKFILGSIGSAIAAVIARFY) are mediates interaction with SKP2 and hepatitis C virus non-structural protein NS5A. Residues 103–112 (TKFILGSIGS) are required for hepatitis C virus non-structural protein NS5A degradation.

It belongs to the IFI6/IFI27 family. Homodimer. Interacts with hepatitis C virus/HCV non-structural protein NS5A; promotes the ubiquitin-mediated proteasomal degradation of NS5A. Interacts with SKP2; promotes the ubiquitin-mediated proteasomal degradation of NS5A. Interacts with NR4A1. May interact with BCL2. Ubiquitinated by TRIM21 via 'Lys-6'-linked ubiquitin chains leading to IFI27 mitochondrial migration.

It localises to the mitochondrion membrane. The protein resides in the nucleus inner membrane. It is found in the endoplasmic reticulum membrane. Its function is as follows. Probable adapter protein involved in different biological processes. Part of the signaling pathways that lead to apoptosis. Involved in type-I interferon-induced apoptosis characterized by a rapid and robust release of cytochrome C from the mitochondria and activation of BAX and caspases 2, 3, 6, 8 and 9. Also functions in TNFSF10-induced apoptosis. May also have a function in the nucleus, where it may be involved in the interferon-induced negative regulation of the transcriptional activity of NR4A1, NR4A2 and NR4A3 through the enhancement of XPO1-mediated nuclear export of these nuclear receptors. May thereby play a role in the vascular response to injury. In the innate immune response, has an antiviral activity towards hepatitis C virus/HCV. May prevent the replication of the virus by recruiting both the hepatitis C virus non-structural protein 5A/NS5A and the ubiquitination machinery via SKP2, promoting the ubiquitin-mediated proteasomal degradation of NS5A. Also promotes virus-induced pyroptosis by activating CASP3 in the mitochondria after 'Lys-6'-linked ubiquitination by TRIM21. This chain is Interferon alpha-inducible protein 27, mitochondrial, found in Homo sapiens (Human).